Here is a 406-residue protein sequence, read N- to C-terminus: Argininosuccinate synthase (406 aa).

ATP contacts are provided by residues 10–18 and Ala37; that span reads AYSGGLDTS. The L-citrulline site is built by Tyr88 and Ser93. Residue Gly118 coordinates ATP. Thr120, Asn124, and Asp125 together coordinate L-aspartate. Asn124 lines the L-citrulline pocket. L-citrulline-binding residues include Arg128, Ser179, Ser188, Glu264, and Tyr276.

Belongs to the argininosuccinate synthase family. Type 1 subfamily. Homotetramer.

It localises to the cytoplasm. The enzyme catalyses L-citrulline + L-aspartate + ATP = 2-(N(omega)-L-arginino)succinate + AMP + diphosphate + H(+). It participates in amino-acid biosynthesis; L-arginine biosynthesis; L-arginine from L-ornithine and carbamoyl phosphate: step 2/3. This Roseobacter denitrificans (strain ATCC 33942 / OCh 114) (Erythrobacter sp. (strain OCh 114)) protein is Argininosuccinate synthase.